A 679-amino-acid chain; its full sequence is Protein hook (679 aa).

The Calponin-homology (CH) domain occupies asparagine 6 to alanine 123. Coiled-coil stretches lie at residues glutamate 135–glycine 437 and glutamine 480–leucine 574.

It belongs to the hook family. Homodimer. Interacts with microtubules via its N-terminus.

It is found in the cytoplasm. The protein localises to the cytoskeleton. It localises to the endosome. The protein resides in the synapse. In terms of biological role, involved in endocytic trafficking by stabilizing organelles of the endocytic pathway. Probably acts as a cytoskeletal linker protein required to tether endosome vesicles to the cytoskeleton. Involved in modulation of endocytosis at stages required for down-regulation of membrane proteins that control synapse size. Not involved in synaptic vesicle recycling. Required in R7 cells for boss endocytosis into multivesicular bodies (MVBs). Has a role in regulating adult longevity. The sequence is that of Protein hook from Drosophila erecta (Fruit fly).